The following is a 1220-amino-acid chain: Myosin-2 (1220 aa).

The segment covering 1–12 (MMLSASPNTLAK) has biased composition (polar residues). Disordered regions lie at residues 1–54 (MMLS…ARRS) and 68–95 (QNGSVVSVTPAVEAESERKEEGVKRKEK). Residues 20 to 33 (ESLRQKDECDRPKD) are compositionally biased toward basic and acidic residues. Residues 40–54 (SRPNSRARLPSARRS) are compositionally biased toward low complexity. Over residues 82–95 (ESERKEEGVKRKEK) the composition is skewed to basic and acidic residues. A Myosin N-terminal SH3-like domain is found at 160-209 (KKKLRVWCRVSNGQWQLGKIQSTSADTSLVMLSTANVVKVSTEELFPANP). Positions 213 to 879 (EGVEDLIQLS…QIGIFEDRRK (667 aa)) constitute a Myosin motor domain. ATP-binding positions include 304–311 (GESGAGKT) and 353–361 (NANSSRFGK). Actin-binding stretches follow at residues 638-672 (LIEKKPIGLLSLLDEESNFPKATDLTFANKLKQHL) and 759-781 (LFKLMNKLENTSPHFIRCIKPNS). 3 consecutive IQ domains span residues 881–910 (VLQGIVGLQKHFRGHLSRAYFQNMRKVTLV), 904–933 (MRKVTLVLQSYIRGENARRLFDTEAKFHAD), and 942–971 (ELSAVIHLQSAVRGWLARKHFNSMQRQKEL). 2 disordered regions span residues 968–1007 (QKELRNVATKSKRKAGRRISEDKDIPLEQPQVQPTSMSDL) and 1075–1118 (SITG…NGNT). Polar residues-rich tracts occupy residues 997 to 1006 (PQVQPTSMSD) and 1098 to 1118 (TMSTGTPGVRTPTNKFTNGNT). The stretch at 1003 to 1071 (SMSDLQKRIL…MSLAAARKSL (69 aa)) forms a coiled coil.

The protein belongs to the TRAFAC class myosin-kinesin ATPase superfamily. Myosin family. Plant myosin class VIII subfamily. As to quaternary structure, homodimer. In terms of tissue distribution, expressed in flowers, leaves and roots.

It is found in the cell junction. The protein resides in the plasmodesma. Its subcellular location is the endosome. Myosin heavy chain that is required for the cell cycle-regulated transport of various organelles and proteins for their segregation. Functions by binding with its tail domain to receptor proteins on organelles and exerting force with its N-terminal motor domain against actin filaments, thereby transporting its cargo along polarized actin cables. Involved in endocytosis via its action in endosomal trafficking. The polypeptide is Myosin-2 (VIII-2) (Arabidopsis thaliana (Mouse-ear cress)).